The following is an 85-amino-acid chain: UPF0386 protein HNE_3437 (85 aa).

The protein belongs to the UPF0386 family.

The protein is UPF0386 protein HNE_3437 of Hyphomonas neptunium (strain ATCC 15444).